The primary structure comprises 582 residues: Phosphoribosylaminoimidazole carboxylase (582 aa).

An ATP-grasp domain is found at 114–305 (KKYLAEKGVA…QFENHLRAIL (192 aa)). 143–200 (AGRLGLPLMLKAKTLAYDGRGNSPLKSTSSEDIQASLKFLGDRPLYAEGWAPFVKEVA) serves as a coordination point for ATP.

This sequence in the C-terminal section; belongs to the AIR carboxylase family. Class I subfamily.

It carries out the reaction 5-amino-1-(5-phospho-D-ribosyl)imidazole-4-carboxylate + H(+) = 5-amino-1-(5-phospho-beta-D-ribosyl)imidazole + CO2. It functions in the pathway purine metabolism; IMP biosynthesis via de novo pathway; 5-amino-1-(5-phospho-D-ribosyl)imidazole-4-carboxylate from 5-amino-1-(5-phospho-D-ribosyl)imidazole (carboxylase route): step 1/1. This is Phosphoribosylaminoimidazole carboxylase (ADE2) from Cryptococcus neoformans var. grubii serotype A (strain H99 / ATCC 208821 / CBS 10515 / FGSC 9487) (Filobasidiella neoformans var. grubii).